Reading from the N-terminus, the 310-residue chain is Cytochrome f (310 aa).

The first 26 residues, 1–26 (MNIKLTLLVLISIINLMIIQPIQTLA), serve as a signal peptide directing secretion. Residues phenylalanine 27, cysteine 47, cysteine 50, and histidine 51 each contribute to the heme site. A helical transmembrane segment spans residues 276-296 (IKGMIVFFFTVTIAQIFFVLK).

Belongs to the cytochrome f family. The 4 large subunits of the cytochrome b6-f complex are cytochrome b6, subunit IV (17 kDa polypeptide, petD), cytochrome f and the Rieske protein, while the 4 small subunits are PetG, PetL, PetM and PetN. The complex functions as a dimer. Heme serves as cofactor.

Its subcellular location is the plastid. It is found in the chloroplast thylakoid membrane. Its function is as follows. Component of the cytochrome b6-f complex, which mediates electron transfer between photosystem II (PSII) and photosystem I (PSI), cyclic electron flow around PSI, and state transitions. The chain is Cytochrome f from Gracilaria tenuistipitata var. liui (Red alga).